An 81-amino-acid chain; its full sequence is Neurotoxin LmNaTx11.1 (81 aa).

The first 18 residues, 1 to 18 (MKIVIIFFIAMMAVGVYS), serve as a signal peptide directing secretion. The 62-residue stretch at 19 to 80 (KDGYLVKKNG…PTYPSSKTCS (62 aa)) folds into the LCN-type CS-alpha/beta domain. 4 disulfides stabilise this stretch: C29–C79, C33–C56, C42–C61, and C46–C63.

It belongs to the long (4 C-C) scorpion toxin superfamily. Sodium channel inhibitor family. Beta subfamily. In terms of tissue distribution, expressed by the venom gland.

It is found in the secreted. Binds voltage-independently at site-4 of sodium channels (Nav) and shift the voltage of activation toward more negative potentials thereby affecting sodium channel activation and promoting spontaneous and repetitive firing. This chain is Neurotoxin LmNaTx11.1, found in Lychas mucronatus (Chinese swimming scorpion).